The sequence spans 282 residues: Sulfur carrier protein FdhD (282 aa).

Cys-126 functions as the Cysteine persulfide intermediate in the catalytic mechanism. 265–270 (FVRNNR) is a Mo-bis(molybdopterin guanine dinucleotide) binding site.

It belongs to the FdhD family.

The protein localises to the cytoplasm. Required for formate dehydrogenase (FDH) activity. Acts as a sulfur carrier protein that transfers sulfur from IscS to the molybdenum cofactor prior to its insertion into FDH. In Thermoplasma acidophilum (strain ATCC 25905 / DSM 1728 / JCM 9062 / NBRC 15155 / AMRC-C165), this protein is Sulfur carrier protein FdhD.